Here is an 84-residue protein sequence, read N- to C-terminus: MSCCGGNCGCGSGCQCGNGCGGCKMFPDFGSDEKITTTHTLVLGFAPAKGSVEGFEMVAGAAENDCKCGSNCSCTDCRCDPCNC.

This sequence belongs to the metallothionein superfamily. Type 15 family. Expressed in leaves, stems and roots.

It localises to the cytoplasm. It is found in the nucleus. Metallothioneins have a high content of cysteine residues that bind various heavy metals. Probably involved in maintaining homeostasis of essential transition metals and detoxification of toxic metals. Increases cadmium and zinc tolerance when expressed in heterologous systems. Metal chelator binding 6 cadmium or 5 zinc atoms per protein. The protein is Metallothionein type 2b of Colocasia esculenta (Wild taro).